The chain runs to 308 residues: N-acetylmuramic acid 6-phosphate etherase (308 aa).

One can recognise an SIS domain in the interval 62–225 (TAARLRQGGR…STGVMVQLGK (164 aa)). The active-site Proton donor is the glutamate 90. The active site involves glutamate 121.

It belongs to the GCKR-like family. MurNAc-6-P etherase subfamily. In terms of assembly, homodimer.

The catalysed reaction is N-acetyl-D-muramate 6-phosphate + H2O = N-acetyl-D-glucosamine 6-phosphate + (R)-lactate. Its pathway is amino-sugar metabolism; N-acetylmuramate degradation. In terms of biological role, specifically catalyzes the cleavage of the D-lactyl ether substituent of MurNAc 6-phosphate, producing GlcNAc 6-phosphate and D-lactate. This is N-acetylmuramic acid 6-phosphate etherase from Thermosynechococcus vestitus (strain NIES-2133 / IAM M-273 / BP-1).